The primary structure comprises 94 residues: MEKQTENTRPECPKAFYFVSIPGDFGQTPFASSLMYGSTALAAVYQVKGAIRVVSEHFDLRFADNGFTPAGVTQAEWLGKLITETFGFRLELFL.

Binds to single-stranded DNA (ssDNA). The polypeptide is Protein P19 (XIX) (Acinetobacter calcoaceticus (Arthrobacter siderocapsulatus)).